Here is a 328-residue protein sequence, read N- to C-terminus: MTDTRKPPRKKPQRPAKPAAPREKATLHPRNRHQGHYDFAKLIKSSPELAAFVILNPYGKESIDFADPQAVRVFNRALLKAFYGIAHWDIPADYLCPPIPGRADYLHFLADLLAEDNEGVIPRGASIKALDIGTGANCIYPLLGHSDYGWQFVGSDIDSTAIAAATTIIKANGLSKAISVRQQDNRKQILLGLLDSSERFHVSLCNPPFHASLDEAQRGSQRKWRALGKADPKRKLPVLNFGGQSQELWCEGGEIGFVTRLIQESATLPSQVVWFSTLVSKASNLPPIQNALKKAGALEVKVIEMGQGQKQSRFVAWTFLDKAQRTPH.

The disordered stretch occupies residues 1 to 31 (MTDTRKPPRKKPQRPAKPAAPREKATLHPRN).

The protein belongs to the methyltransferase superfamily. METTL16/RlmF family.

It is found in the cytoplasm. It catalyses the reaction adenosine(1618) in 23S rRNA + S-adenosyl-L-methionine = N(6)-methyladenosine(1618) in 23S rRNA + S-adenosyl-L-homocysteine + H(+). In terms of biological role, specifically methylates the adenine in position 1618 of 23S rRNA. The sequence is that of Ribosomal RNA large subunit methyltransferase F from Pseudomonas savastanoi pv. phaseolicola (strain 1448A / Race 6) (Pseudomonas syringae pv. phaseolicola (strain 1448A / Race 6)).